We begin with the raw amino-acid sequence, 426 residues long: Adenylosuccinate synthetase (426 aa).

GTP is bound by residues 13–19 (GDEGKGK) and 41–43 (GHT). Residue aspartate 14 is the Proton acceptor of the active site. Mg(2+)-binding residues include aspartate 14 and glycine 41. IMP-binding positions include 14–17 (DEGK), 39–42 (NAGH), threonine 129, arginine 143, glutamine 224, threonine 239, and arginine 303. The Proton donor role is filled by histidine 42. 299-305 (TTTGRPR) is a substrate binding site. GTP contacts are provided by residues arginine 305, 331–333 (KLD), and 414–416 (GTG).

This sequence belongs to the adenylosuccinate synthetase family. In terms of assembly, homodimer. The cofactor is Mg(2+).

The protein resides in the cytoplasm. The enzyme catalyses IMP + L-aspartate + GTP = N(6)-(1,2-dicarboxyethyl)-AMP + GDP + phosphate + 2 H(+). It participates in purine metabolism; AMP biosynthesis via de novo pathway; AMP from IMP: step 1/2. Plays an important role in the de novo pathway of purine nucleotide biosynthesis. Catalyzes the first committed step in the biosynthesis of AMP from IMP. This is Adenylosuccinate synthetase from Caldicellulosiruptor bescii (strain ATCC BAA-1888 / DSM 6725 / KCTC 15123 / Z-1320) (Anaerocellum thermophilum).